A 248-amino-acid chain; its full sequence is UPF0736 protein BC_1176 (248 aa).

Belongs to the UPF0736 family.

The sequence is that of UPF0736 protein BC_1176 from Bacillus cereus (strain ATCC 14579 / DSM 31 / CCUG 7414 / JCM 2152 / NBRC 15305 / NCIMB 9373 / NCTC 2599 / NRRL B-3711).